Here is a 492-residue protein sequence, read N- to C-terminus: Bifunctional protein GlmU (492 aa).

The pyrophosphorylase stretch occupies residues 1–241 (MTFRGDTAVV…SALVAGVNDR (241 aa)). UDP-N-acetyl-alpha-D-glucosamine contacts are provided by residues 12–15 (LAAG), K26, Q83, and 88–89 (GT). Residue D114 coordinates Mg(2+). Positions 151, 166, 181, and 239 each coordinate UDP-N-acetyl-alpha-D-glucosamine. Mg(2+) is bound at residue N239. A linker region spans residues 242–262 (VQLAQLGAELNRRIVAAHQMA). The N-acetyltransferase stretch occupies residues 263 to 492 (GVTVIDPATT…TPPPDADHPP (230 aa)). UDP-N-acetyl-alpha-D-glucosamine contacts are provided by R344 and K362. The active-site Proton acceptor is the H374. Residues Y377 and N388 each coordinate UDP-N-acetyl-alpha-D-glucosamine. Acetyl-CoA contacts are provided by residues A391, 397–398 (NY), and A434. The tract at residues 443–492 (PPGALAVSGGPQRNIEDWVQQKRPGTPSAEAARKASAEQSTPPPDADHPP) is disordered.

In the N-terminal section; belongs to the N-acetylglucosamine-1-phosphate uridyltransferase family. This sequence in the C-terminal section; belongs to the transferase hexapeptide repeat family. Homotrimer. Mg(2+) is required as a cofactor.

The protein localises to the cytoplasm. It carries out the reaction alpha-D-glucosamine 1-phosphate + acetyl-CoA = N-acetyl-alpha-D-glucosamine 1-phosphate + CoA + H(+). The enzyme catalyses N-acetyl-alpha-D-glucosamine 1-phosphate + UTP + H(+) = UDP-N-acetyl-alpha-D-glucosamine + diphosphate. It functions in the pathway nucleotide-sugar biosynthesis; UDP-N-acetyl-alpha-D-glucosamine biosynthesis; N-acetyl-alpha-D-glucosamine 1-phosphate from alpha-D-glucosamine 6-phosphate (route II): step 2/2. Its pathway is nucleotide-sugar biosynthesis; UDP-N-acetyl-alpha-D-glucosamine biosynthesis; UDP-N-acetyl-alpha-D-glucosamine from N-acetyl-alpha-D-glucosamine 1-phosphate: step 1/1. The protein operates within bacterial outer membrane biogenesis; LPS lipid A biosynthesis. Its function is as follows. Catalyzes the last two sequential reactions in the de novo biosynthetic pathway for UDP-N-acetylglucosamine (UDP-GlcNAc). The C-terminal domain catalyzes the transfer of acetyl group from acetyl coenzyme A to glucosamine-1-phosphate (GlcN-1-P) to produce N-acetylglucosamine-1-phosphate (GlcNAc-1-P), which is converted into UDP-GlcNAc by the transfer of uridine 5-monophosphate (from uridine 5-triphosphate), a reaction catalyzed by the N-terminal domain. This Mycobacterium ulcerans (strain Agy99) protein is Bifunctional protein GlmU.